The primary structure comprises 284 residues: Bifunctional protein FolD (284 aa).

NADP(+)-binding positions include 165–167, Ser190, and Val231; that span reads GRS.

This sequence belongs to the tetrahydrofolate dehydrogenase/cyclohydrolase family. In terms of assembly, homodimer.

The enzyme catalyses (6R)-5,10-methylene-5,6,7,8-tetrahydrofolate + NADP(+) = (6R)-5,10-methenyltetrahydrofolate + NADPH. The catalysed reaction is (6R)-5,10-methenyltetrahydrofolate + H2O = (6R)-10-formyltetrahydrofolate + H(+). Its pathway is one-carbon metabolism; tetrahydrofolate interconversion. Its function is as follows. Catalyzes the oxidation of 5,10-methylenetetrahydrofolate to 5,10-methenyltetrahydrofolate and then the hydrolysis of 5,10-methenyltetrahydrofolate to 10-formyltetrahydrofolate. The sequence is that of Bifunctional protein FolD from Bacillus licheniformis (strain ATCC 14580 / DSM 13 / JCM 2505 / CCUG 7422 / NBRC 12200 / NCIMB 9375 / NCTC 10341 / NRRL NRS-1264 / Gibson 46).